The sequence spans 204 residues: N-(5'-phosphoribosyl)anthranilate isomerase (204 aa).

Belongs to the TrpF family.

The catalysed reaction is N-(5-phospho-beta-D-ribosyl)anthranilate = 1-(2-carboxyphenylamino)-1-deoxy-D-ribulose 5-phosphate. It participates in amino-acid biosynthesis; L-tryptophan biosynthesis; L-tryptophan from chorismate: step 3/5. This Bacillus cereus (strain ZK / E33L) protein is N-(5'-phosphoribosyl)anthranilate isomerase.